The chain runs to 270 residues: Diaminopimelate epimerase (270 aa).

The substrate site is built by asparagine 15, glutamine 49, and asparagine 66. The Proton donor role is filled by cysteine 75. Substrate contacts are provided by residues 76–77 (GN), asparagine 155, asparagine 187, and 204–205 (ER). The Proton acceptor role is filled by cysteine 213. Residue 214–215 (GS) coordinates substrate.

The protein belongs to the diaminopimelate epimerase family. As to quaternary structure, homodimer.

It localises to the cytoplasm. It carries out the reaction (2S,6S)-2,6-diaminopimelate = meso-2,6-diaminopimelate. The protein operates within amino-acid biosynthesis; L-lysine biosynthesis via DAP pathway; DL-2,6-diaminopimelate from LL-2,6-diaminopimelate: step 1/1. Functionally, catalyzes the stereoinversion of LL-2,6-diaminopimelate (L,L-DAP) to meso-diaminopimelate (meso-DAP), a precursor of L-lysine and an essential component of the bacterial peptidoglycan. The polypeptide is Diaminopimelate epimerase (Rickettsia typhi (strain ATCC VR-144 / Wilmington)).